The sequence spans 104 residues: Co-chaperonin GroES 2 (104 aa).

It belongs to the GroES chaperonin family. In terms of assembly, heptamer of 7 subunits arranged in a ring. Interacts with the chaperonin GroEL.

It localises to the cytoplasm. Together with the chaperonin GroEL, plays an essential role in assisting protein folding. The GroEL-GroES system forms a nano-cage that allows encapsulation of the non-native substrate proteins and provides a physical environment optimized to promote and accelerate protein folding. GroES binds to the apical surface of the GroEL ring, thereby capping the opening of the GroEL channel. The chain is Co-chaperonin GroES 2 from Mesorhizobium japonicum (strain LMG 29417 / CECT 9101 / MAFF 303099) (Mesorhizobium loti (strain MAFF 303099)).